The following is a 427-amino-acid chain: 3-phosphoshikimate 1-carboxyvinyltransferase (427 aa).

Residues K22, S23, and R27 each contribute to the 3-phosphoshikimate site. K22 serves as a coordination point for phosphoenolpyruvate. Residues G96 and R124 each coordinate phosphoenolpyruvate. 3-phosphoshikimate contacts are provided by S169, S170, Q171, S197, D313, N336, and K340. A phosphoenolpyruvate-binding site is contributed by Q171. Catalysis depends on D313, which acts as the Proton acceptor. The phosphoenolpyruvate site is built by R344, R386, and K411.

The protein belongs to the EPSP synthase family. In terms of assembly, monomer.

It localises to the cytoplasm. The enzyme catalyses 3-phosphoshikimate + phosphoenolpyruvate = 5-O-(1-carboxyvinyl)-3-phosphoshikimate + phosphate. Its pathway is metabolic intermediate biosynthesis; chorismate biosynthesis; chorismate from D-erythrose 4-phosphate and phosphoenolpyruvate: step 6/7. Its function is as follows. Catalyzes the transfer of the enolpyruvyl moiety of phosphoenolpyruvate (PEP) to the 5-hydroxyl of shikimate-3-phosphate (S3P) to produce enolpyruvyl shikimate-3-phosphate and inorganic phosphate. This is 3-phosphoshikimate 1-carboxyvinyltransferase from Escherichia coli O127:H6 (strain E2348/69 / EPEC).